Consider the following 719-residue polypeptide: Protein psiJ (719 aa).

Residues 1–21 (MVSNLLKGLILFSLFISFLNG) form the signal peptide. At 22 to 653 (DDKIFPVTIR…RCQSVAVKAG (632 aa)) the chain is on the extracellular side. N-linked (GlcNAc...) asparagine glycosylation is found at Asn-46, Asn-59, Asn-86, Asn-113, Asn-301, Asn-372, Asn-435, Asn-457, Asn-562, and Asn-628. In terms of domain architecture, PA14 spans 112–260 (QNQTDPRVFY…KDYCGVCEGT (149 aa)). The chain crosses the membrane as a helical span at residues 654–674 (VIGGAAIAGVVVGGAVALGLA). The Cytoplasmic segment spans residues 675–719 (LFGAKAGYNHWMSLKNNQMATSSVNPLYEPSPHQGTNPLWEAPPT).

It belongs to the prespore-cell-inducing factor family.

Its subcellular location is the membrane. The sequence is that of Protein psiJ (psiJ) from Dictyostelium discoideum (Social amoeba).